Here is a 160-residue protein sequence, read N- to C-terminus: Cytochrome b6-f complex subunit 4 (160 aa).

The next 3 helical transmembrane spans lie at 36 to 56 (LLYI…GLAV), 95 to 115 (LLGV…PFLE), and 131 to 151 (TVFL…ALPI).

This sequence belongs to the cytochrome b family. PetD subfamily. The 4 large subunits of the cytochrome b6-f complex are cytochrome b6, subunit IV (17 kDa polypeptide, petD), cytochrome f and the Rieske protein, while the 4 small subunits are petG, petL, petM and petN. The complex functions as a dimer.

It localises to the plastid. The protein localises to the chloroplast thylakoid membrane. In terms of biological role, component of the cytochrome b6-f complex, which mediates electron transfer between photosystem II (PSII) and photosystem I (PSI), cyclic electron flow around PSI, and state transitions. The chain is Cytochrome b6-f complex subunit 4 from Psilotum nudum (Whisk fern).